The primary structure comprises 387 residues: Carbamoyl phosphate synthase small chain (387 aa).

The CPSase stretch occupies residues 1–189 (MIKSAILVLE…GLPEDKQEQD (189 aa)). L-glutamine contacts are provided by Ser47, Gly241, and Gly243. Positions 193-380 (HVVAYDFGAK…IELIEQYCQK (188 aa)) constitute a Glutamine amidotransferase type-1 domain. Cys269 serves as the catalytic Nucleophile. L-glutamine is bound by residues Leu270, Gln273, Asn311, Gly313, and Phe314. Active-site residues include His353 and Glu355.

This sequence belongs to the CarA family. In terms of assembly, composed of two chains; the small (or glutamine) chain promotes the hydrolysis of glutamine to ammonia, which is used by the large (or ammonia) chain to synthesize carbamoyl phosphate. Tetramer of heterodimers (alpha,beta)4.

The enzyme catalyses hydrogencarbonate + L-glutamine + 2 ATP + H2O = carbamoyl phosphate + L-glutamate + 2 ADP + phosphate + 2 H(+). It carries out the reaction L-glutamine + H2O = L-glutamate + NH4(+). The protein operates within amino-acid biosynthesis; L-arginine biosynthesis; carbamoyl phosphate from bicarbonate: step 1/1. Its pathway is pyrimidine metabolism; UMP biosynthesis via de novo pathway; (S)-dihydroorotate from bicarbonate: step 1/3. In terms of biological role, small subunit of the glutamine-dependent carbamoyl phosphate synthetase (CPSase). CPSase catalyzes the formation of carbamoyl phosphate from the ammonia moiety of glutamine, carbonate, and phosphate donated by ATP, constituting the first step of 2 biosynthetic pathways, one leading to arginine and/or urea and the other to pyrimidine nucleotides. The small subunit (glutamine amidotransferase) binds and cleaves glutamine to supply the large subunit with the substrate ammonia. The sequence is that of Carbamoyl phosphate synthase small chain from Photorhabdus laumondii subsp. laumondii (strain DSM 15139 / CIP 105565 / TT01) (Photorhabdus luminescens subsp. laumondii).